The primary structure comprises 354 residues: G-protein coupled estrogen receptor 1 (354 aa).

Residues 1-40 (MEEQTTSLVWIYVNSTEQLNTSYEYNTTYLIEDSDKYQSY) are Extracellular-facing. Residues 41–61 (VIGLFLSCLYTILLFPIGFIG) traverse the membrane as a helical segment. The Cytoplasmic portion of the chain corresponds to 62 to 81 (NILILVVNLNHRGKMAIPDL). A helical membrane pass occupies residues 82-102 (YFVNLAVADLILVADSLIEVF). At 103 to 112 (NLNEKYYDYA) the chain is on the extracellular side. Residues 113–133 (VLCTFMSLFLQVNMYSSIFFL) form a helical membrane-spanning segment. Cys-115 and Cys-192 are oxidised to a cystine. The Cytoplasmic portion of the chain corresponds to 134–160 (TWMSFDRYIALANSMSSSPLRTMQHAK). A helical membrane pass occupies residues 161 to 181 (LSCGLIWMASILATLLPFTIV). Residues 182–202 (QTQHRGEVHFCFANVFEIQWL) are Extracellular-facing. A helical membrane pass occupies residues 203 to 223 (EVTIGFLVPFSIIGLCYSLIG). At 224–245 (RILMRSQKHRGLWPRRQKALRM) the chain is on the cytoplasmic side. A helical membrane pass occupies residues 246–266 (IVVVVLVFFICWLPENVFISI). Residues 267–292 (QLLQGTADPSQRTATTLRHDYPLTGH) lie on the Extracellular side of the membrane. Residues 293-313 (IVNLAAFSNSCLNPIIYSFLG) form a helical membrane-spanning segment. The Cytoplasmic segment spans residues 314 to 353 (ETFRDKLRLFIKQKASWSVVNRFCHHGLDLHLPVRSEVSE).

It belongs to the G-protein coupled receptor 1 family. In terms of assembly, homodimer. Heterodimer. Expressed in oocytes (at protein level). Highly expressed in brain, heart, testis and ovary. Weakly expressed in muscle and intestine.

It is found in the nucleus. The protein resides in the cytoplasm. The protein localises to the perinuclear region. Its subcellular location is the cytoskeleton. It localises to the cytoplasmic vesicle membrane. It is found in the cell membrane. The protein resides in the basolateral cell membrane. The protein localises to the endoplasmic reticulum membrane. Its subcellular location is the early endosome. It localises to the recycling endosome. It is found in the golgi apparatus. The protein resides in the trans-Golgi network. The protein localises to the golgi apparatus membrane. Its subcellular location is the cell projection. It localises to the dendrite. It is found in the dendritic spine membrane. The protein resides in the axon. The protein localises to the postsynaptic density. Its subcellular location is the mitochondrion membrane. In terms of biological role, membrane G-protein coupled estrogen receptor that binds to 17-beta-estradiol (E2) with high affinity, leading to rapid and transient activation of numerous intracellular signaling pathways. Plays a role in the embryonic development of sensory and motor neurons. May induce apoptosis and reduce proliferation of brain cells. Involved in maintenance of meiotic arrest in oocytes. This chain is G-protein coupled estrogen receptor 1 (gper1), found in Micropogonias undulatus (Atlantic croaker).